The primary structure comprises 473 residues: YFFPLFLVTIFLYKWLVKKTPSKNLPPSPPRLPIIGNLHQIGPDPQISLRDLAREYGPVMHLKFGSVPVLVVSSADGAREIFKTHDLVFADRPYSSVANRIFYNGRDMVFARYTEYWRQVKSTCVTQLLSVKRVQSFHNVREEEVALLLDNIENSKSKVINLSEMLIELTGNVVCRAALGSGYNVDSYKSLLLQIMDMLGYSRSIEDFFPSLGWVDWITGLKGKVEKAANGVDAFLEGVLKNHTNPSTSSANKDFVSILLEIQEADAGSSMDKECIKSLIWDMLGAGTETIATALEWTIGALIKSPDAMSKLQKEVREIGKGKSRIEEGDLVKMDYLKAVMKESMRLYFTAPLLVPREARQDVKFMGYDIKSGTQVLINAWAIARDPSSWDNPEEFRPERFLNSPIDYKGFNYEYIPFGAGRRGCPGIQFAISVNELVVANVVNKFNFELPDGKRLEEMDMTASTGITFHKKS.

Residues 1–17 (YFFPLFLVTIFLYKWLV) traverse the membrane as a helical segment. The interval 350–355 (TAPLLV) is substrate specificity. Position 425 (Cys425) interacts with heme.

It belongs to the cytochrome P450 family. Requires heme as cofactor.

The protein resides in the microsome membrane. The enzyme catalyses (7S)-marmesin + reduced [NADPH--hemoprotein reductase] + O2 = psoralen + acetone + oxidized [NADPH--hemoprotein reductase] + 2 H2O + H(+). It functions in the pathway secondary metabolite biosynthesis. Its function is as follows. Involved in the biosynthesis of coumarins and furanocoumarins (FCs), natural products required for defense responses against attacks by predators with potential medical and agroindustrial usages such as anticoagulant, rodenticide and artificial vanilla substitutes. Involved in linear furanocumarin (psoralen) biosynthesis. Converts marmesin to psoralen and, with much lower affinity, 5-hydroxymarmesin to bergaptol. This Pastinaca sativa (Wild parsnip) protein is Psoralen synthase.